We begin with the raw amino-acid sequence, 270 residues long: uncharacterized protein (270 aa).

Residues Asp-53, His-55, Asp-83, Asn-116, His-207, and His-209 each coordinate a divalent metal cation.

This sequence belongs to the metallophosphoesterase superfamily. A divalent metal cation serves as cofactor.

This is an uncharacterized protein from Bacillus subtilis (strain 168).